We begin with the raw amino-acid sequence, 876 residues long: Alanine--tRNA ligase (876 aa).

Positions 568, 572, 670, and 674 each coordinate Zn(2+).

It belongs to the class-II aminoacyl-tRNA synthetase family. The cofactor is Zn(2+).

It localises to the cytoplasm. It carries out the reaction tRNA(Ala) + L-alanine + ATP = L-alanyl-tRNA(Ala) + AMP + diphosphate. Its function is as follows. Catalyzes the attachment of alanine to tRNA(Ala) in a two-step reaction: alanine is first activated by ATP to form Ala-AMP and then transferred to the acceptor end of tRNA(Ala). Also edits incorrectly charged Ser-tRNA(Ala) and Gly-tRNA(Ala) via its editing domain. The polypeptide is Alanine--tRNA ligase (Geotalea uraniireducens (strain Rf4) (Geobacter uraniireducens)).